The following is a 93-amino-acid chain: Translation initiation factor IF-1 (93 aa).

The 72-residue stretch at 1–72 (MAKEELIQFE…EKGRLIFRHK (72 aa)) folds into the S1-like domain. The interval 70–93 (RHKDERPGGGPPRGAPPRGQFRRR) is disordered.

The protein belongs to the IF-1 family. Component of the 30S ribosomal translation pre-initiation complex which assembles on the 30S ribosome in the order IF-2 and IF-3, IF-1 and N-formylmethionyl-tRNA(fMet); mRNA recruitment can occur at any time during PIC assembly.

It localises to the cytoplasm. Functionally, one of the essential components for the initiation of protein synthesis. Stabilizes the binding of IF-2 and IF-3 on the 30S subunit to which N-formylmethionyl-tRNA(fMet) subsequently binds. Helps modulate mRNA selection, yielding the 30S pre-initiation complex (PIC). Upon addition of the 50S ribosomal subunit IF-1, IF-2 and IF-3 are released leaving the mature 70S translation initiation complex. In Rhodopseudomonas palustris (strain BisB18), this protein is Translation initiation factor IF-1.